Consider the following 154-residue polypeptide: Myoglobin (154 aa).

One can recognise a Globin domain in the interval 2–148 (GLSDQEWQQV…FRNDMASKYK (147 aa)). His-65 lines the nitrite pocket. Residue His-65 participates in O2 binding. A heme b-binding site is contributed by His-94.

It belongs to the globin family. In terms of assembly, monomeric.

It is found in the cytoplasm. It localises to the sarcoplasm. The catalysed reaction is Fe(III)-heme b-[protein] + nitric oxide + H2O = Fe(II)-heme b-[protein] + nitrite + 2 H(+). It catalyses the reaction H2O2 + AH2 = A + 2 H2O. In terms of biological role, monomeric heme protein which primary function is to store oxygen and facilitate its diffusion within muscle tissues. Reversibly binds oxygen through a pentacoordinated heme iron and enables its timely and efficient release as needed during periods of heightened demand. Depending on the oxidative conditions of tissues and cells, and in addition to its ability to bind oxygen, it also has a nitrite reductase activity whereby it regulates the production of bioactive nitric oxide. Under stress conditions, like hypoxia and anoxia, it also protects cells against reactive oxygen species thanks to its pseudoperoxidase activity. In Gallus gallus (Chicken), this protein is Myoglobin (MB).